Here is a 1249-residue protein sequence, read N- to C-terminus: ATP-dependent helicase/nuclease subunit A (1249 aa).

A UvrD-like helicase ATP-binding domain is found at 5-482 (TNYTPSQQAV…IVLAENFRSV (478 aa)). 26-33 (ASAGSGKT) contributes to the ATP binding site. The 291-residue stretch at 521–811 (ADMPQTTNLL…NVMTIHGSKG (291 aa)) folds into the UvrD-like helicase C-terminal domain.

It belongs to the helicase family. AddA subfamily. In terms of assembly, heterodimer of AddA and AddB/RexB. Mg(2+) serves as cofactor.

The catalysed reaction is Couples ATP hydrolysis with the unwinding of duplex DNA by translocating in the 3'-5' direction.. The enzyme catalyses ATP + H2O = ADP + phosphate + H(+). Its function is as follows. The heterodimer acts as both an ATP-dependent DNA helicase and an ATP-dependent, dual-direction single-stranded exonuclease. Recognizes the chi site generating a DNA molecule suitable for the initiation of homologous recombination. The AddA nuclease domain is required for chi fragment generation; this subunit has the helicase and 3' -&gt; 5' nuclease activities. This Lactiplantibacillus plantarum (strain ATCC BAA-793 / NCIMB 8826 / WCFS1) (Lactobacillus plantarum) protein is ATP-dependent helicase/nuclease subunit A.